Consider the following 279-residue polypeptide: UTP--glucose-1-phosphate uridylyltransferase (279 aa).

The protein belongs to the UDPGP type 2 family.

The catalysed reaction is alpha-D-glucose 1-phosphate + UTP + H(+) = UDP-alpha-D-glucose + diphosphate. May play a role in stationary phase survival. The chain is UTP--glucose-1-phosphate uridylyltransferase (galU) from Pseudomonas aeruginosa.